The following is a 67-amino-acid chain: Conotoxin Cal6.35 (67 aa).

An N-terminal signal peptide occupies residues 1–22 (MKLTCVLIVAVLILTACQVIAA). 3 cysteine pairs are disulfide-bonded: Cys-43-Cys-53, Cys-46-Cys-59, and Cys-52-Cys-66.

It belongs to the conotoxin O1 superfamily. In terms of tissue distribution, expressed by the venom duct.

It localises to the secreted. Probable neurotoxin. The protein is Conotoxin Cal6.35 of Californiconus californicus (California cone).